The sequence spans 302 residues: G-protein coupled receptor A5 (302 aa).

Residues 1-20 lie on the Extracellular side of the membrane; that stretch reads MADSSNSSLNCTAIHDQTVL. The helical transmembrane segment at 21–41 threads the bilayer; that stretch reads ILGQVFNSVWLFISVIFLYIF. The Cytoplasmic portion of the chain corresponds to 42-50; that stretch reads ACKLCFRPR. The helical transmembrane segment at 51–71 threads the bilayer; the sequence is IYLWLSFYTLGFMLWVLCKVL. The Extracellular segment spans residues 72–81; it reads QEYVTGKFKC. The helical transmembrane segment at 82 to 102 threads the bilayer; sequence VITNCIGDFCLVFLSCIMLGI. The Cytoplasmic portion of the chain corresponds to 103-122; sequence MLDRYLKIQGTLRGGMKDIH. A helical transmembrane segment spans residues 123–143; that stretch reads IGIFVSASCFGSLMIALLDGL. Over 144–173 the chain is Extracellular; sequence HMGDSEKLQFNGTESFKCLPATSVSSYKAQ. The helical transmembrane segment at 174 to 194 threads the bilayer; it reads LMFKSIFCIICIIMCLILTCL. At 195 to 208 the chain is on the cytoplasmic side; that stretch reads TAKKVLGTRLRKKY. A helical transmembrane segment spans residues 209–229; it reads VIVGNVGLLSFVNILLWVMIA. At 230 to 249 the chain is on the extracellular side; sequence CGLLKQALESNLSLCPTKQS. The chain crosses the membrane as a helical span at residues 250 to 270; sequence TYIYPYTMPVTVIFVLVIYLF. At 271 to 302 the chain is on the cytoplasmic side; sequence SSTHMKNAMRKSGQIRHSLSSPNQVQSSFRLV.

The protein belongs to the G-protein coupled receptor 1 family.

The protein resides in the host cell membrane. The protein localises to the host endoplasmic reticulum membrane. Its function is as follows. Acts as a viral G-protein coupled receptor that constitutively activates host alphai-type G-proteins, thereby inhibiting host forskolin-triggered CREB activation. This chain is G-protein coupled receptor A5 (A5), found in Connochaetes taurinus (Blue wildebeest).